Here is a 148-residue protein sequence, read N- to C-terminus: MKVILRKNVASLGDAGEVVDVKNGYANNYLIPQGMAARATDGALKALETERKQQARKIEQQRVAARAIAEKIQQMTLKVPARAGESGKLFGTVTSVNIADALKVEGVDVDRRKITLDAPIRALGNYEAEVKLFMDVSATIKVTVEAEG.

Belongs to the bacterial ribosomal protein bL9 family.

Functionally, binds to the 23S rRNA. In Prosthecochloris aestuarii (strain DSM 271 / SK 413), this protein is Large ribosomal subunit protein bL9.